The sequence spans 559 residues: Regulatory protein PHO2 (559 aa).

4 disordered regions span residues 16 to 88 (ATDL…KGEA), 132 to 158 (LRKK…DYDR), 293 to 333 (INSN…AKDN), and 534 to 559 (PTDS…HRWI). Composition is skewed to low complexity over residues 24 to 52 (HDQQ…IQTQ) and 63 to 74 (NDMSASSNASDS). A DNA-binding region (homeobox) is located at residues 77-136 (QRPKRTRAKGEALDVLKRKFEINPTPSLVERKKISDLIGMPEKNVRIWFQNRRAKLRKKQ). Polar residues predominate over residues 141–151 (KDTIPSSQSRD). The segment covering 293 to 307 (INSNNTSDKNNSNTN) has biased composition (low complexity). Residues 308–323 (NDDDNDDNSNEDNDNS) are compositionally biased toward acidic residues. Basic and acidic residues predominate over residues 324–333 (SEDKRNAKDN). Residue threonine 542 is modified to Phosphothreonine.

Its subcellular location is the nucleus. In terms of biological role, regulator in phosphate metabolism and acts as a derepressor of another central regulator PHO5. Binds to the upstream activator sequence (UAS) of PHO5. It also binds to the TRP4, HIS4, and CYC1 promoters. The sequence is that of Regulatory protein PHO2 (PHO2) from Saccharomyces cerevisiae (strain ATCC 204508 / S288c) (Baker's yeast).